Here is a 212-residue protein sequence, read N- to C-terminus: RNA chaperone ProQ (212 aa).

Residues 107 to 153 (QDKAKAKRVAQAKSANPAAKTAKKPVKKPVAKRPKPAQSSKPAKEPV) are disordered. The segment covering 117-126 (QAKSANPAAK) has biased composition (low complexity). Over residues 127–141 (TAKKPVKKPVAKRPK) the composition is skewed to basic residues.

The protein belongs to the ProQ family.

It localises to the cytoplasm. Functionally, RNA chaperone with significant RNA binding, RNA strand exchange and RNA duplexing activities. The sequence is that of RNA chaperone ProQ from Shewanella pealeana (strain ATCC 700345 / ANG-SQ1).